Reading from the N-terminus, the 577-residue chain is Arginine--tRNA ligase (577 aa).

Residues 122–132 carry the 'HIGH' region motif; sequence PNVAKEMHVGH.

The protein belongs to the class-I aminoacyl-tRNA synthetase family. Monomer.

It localises to the cytoplasm. It carries out the reaction tRNA(Arg) + L-arginine + ATP = L-arginyl-tRNA(Arg) + AMP + diphosphate. In Histophilus somni (strain 129Pt) (Haemophilus somnus), this protein is Arginine--tRNA ligase.